Consider the following 472-residue polypeptide: Glutamate--tRNA ligase 1 (472 aa).

A 'HIGH' region motif is present at residues 9–19; that stretch reads PSPTGLLHVGN. Basic and acidic residues predominate over residues 112–131; the sequence is AMAEKRPPRYDGTWRDRDPS. The tract at residues 112 to 133 is disordered; the sequence is AMAEKRPPRYDGTWRDRDPSEA. Residues 238 to 242 carry the 'KMSKS' region motif; that stretch reads KLSKR. Residue Lys241 participates in ATP binding.

This sequence belongs to the class-I aminoacyl-tRNA synthetase family. Glutamate--tRNA ligase type 1 subfamily. Monomer.

Its subcellular location is the cytoplasm. It carries out the reaction tRNA(Glu) + L-glutamate + ATP = L-glutamyl-tRNA(Glu) + AMP + diphosphate. In terms of biological role, catalyzes the attachment of glutamate to tRNA(Glu) in a two-step reaction: glutamate is first activated by ATP to form Glu-AMP and then transferred to the acceptor end of tRNA(Glu). This chain is Glutamate--tRNA ligase 1, found in Gluconobacter oxydans (strain 621H) (Gluconobacter suboxydans).